We begin with the raw amino-acid sequence, 647 residues long: Acetyl-coenzyme A synthetase (647 aa).

CoA is bound by residues 189–192 (RGGK), Thr-307, and Asn-331. ATP contacts are provided by residues 383–385 (GEP), 407–412 (DTWWQT), Asp-496, and Arg-511. Ser-519 contacts CoA. Residue Arg-522 coordinates ATP. Positions 535 and 538 each coordinate Mg(2+). A CoA-binding site is contributed by Arg-580. Position 605 is an N6-acetyllysine (Lys-605).

Belongs to the ATP-dependent AMP-binding enzyme family. Mg(2+) is required as a cofactor. Post-translationally, acetylated. Deacetylation by the SIR2-homolog deacetylase activates the enzyme.

The catalysed reaction is acetate + ATP + CoA = acetyl-CoA + AMP + diphosphate. Its function is as follows. Catalyzes the conversion of acetate into acetyl-CoA (AcCoA), an essential intermediate at the junction of anabolic and catabolic pathways. AcsA undergoes a two-step reaction. In the first half reaction, AcsA combines acetate with ATP to form acetyl-adenylate (AcAMP) intermediate. In the second half reaction, it can then transfer the acetyl group from AcAMP to the sulfhydryl group of CoA, forming the product AcCoA. In Syntrophus aciditrophicus (strain SB), this protein is Acetyl-coenzyme A synthetase.